The primary structure comprises 281 residues: MAAEHDSDSVEPPGSEALLDAVLRTLYDLGETEGETEQKRIRKKKAKKRDSETIEDVAVEPLPLPGSPVRGQKKSASSFFQKLREELQSAPAAPSEVPVTTAVSLSPPKNGSKLVEVVEFQSKSKKRKLKSDEDEPAKNKTKVVKKDVDIQEFNLEKARLEVHRFGITGYGKGKERVLERERAIMLGAKPPKNTYVNYKVLQKQIKEKKIAVEEEKRAARETDIFKKKKKKGRGQEDRRSKKSAPSILSSGQVGQVGKFRNGTLILSPTDIKKINSSRVAK.

Positions 29-141 (LGETEGETEQ…DEDEPAKNKT (113 aa)) are disordered. Phosphoserine occurs at positions 67 and 75. The residue at position 172 (lysine 172) is an N6-acetyllysine. Positions 221–254 (ETDIFKKKKKKGRGQEDRRSKKSAPSILSSGQVG) are disordered. Residue serine 267 is modified to Phosphoserine.

Part of the small subunit (SSU) processome, composed of more than 70 proteins and the RNA chaperone small nucleolar RNA (snoRNA) U3.

The protein localises to the chromosome. Its subcellular location is the nucleus. It is found in the nucleolus. Its function is as follows. Part of the small subunit (SSU) processome, first precursor of the small eukaryotic ribosomal subunit. During the assembly of the SSU processome in the nucleolus, many ribosome biogenesis factors, an RNA chaperone and ribosomal proteins associate with the nascent pre-rRNA and work in concert to generate RNA folding, modifications, rearrangements and cleavage as well as targeted degradation of pre-ribosomal RNA by the RNA exosome. Prevents helicase DHX37 to be recruited before post-A1 state. This chain is 40S small subunit processome assembly factor 1, found in Mus musculus (Mouse).